A 334-amino-acid polypeptide reads, in one-letter code: MNTEATHDQNEAQTTGVRLRNAREQLGLSQQAVAERLCLKVSTVRDIEEDKAPSDLASTFLRGYIRSYARLVHVPEEELLPGLEKQAPLRAAKVAPMQSFSLGKRRKKRDGWLMSFTWLVLFVVVGLTGAWWWQNHKAQQEEITTMADQSTAELNADKDSGQSVPLDTGAATSQDTTPAQTAPAPATPVDSTAATQTPAPTAAATQNTVVAPSQANVDTAATSAAPAATETPSALPTSQAGVAAPAADPNALVMNFTADCWLEVTDATGKKLFSGMQRKDGNLNLTGQAPYKLKIGAPAAVQIQYQGKPVDLSRFIRTNQVARLTLNAEPTPAQ.

Residues 1-111 are Cytoplasmic-facing; that stretch reads MNTEATHDQN…LGKRRKKRDG (111 aa). Residues 19–71 enclose the HTH cro/C1-type domain; it reads LRNAREQLGLSQQAVAERLCLKVSTVRDIEEDKAPSDLASTFLRGYIRSYARL. Residues 30 to 49 constitute a DNA-binding region (H-T-H motif); the sequence is QQAVAERLCLKVSTVRDIEE. The chain crosses the membrane as a helical; Signal-anchor for type II membrane protein span at residues 112-132; sequence WLMSFTWLVLFVVVGLTGAWW. Residues 133 to 334 are Periplasmic-facing; sequence WQNHKAQQEE…TLNAEPTPAQ (202 aa). The disordered stretch occupies residues 155 to 241; it reads NADKDSGQSV…PSALPTSQAG (87 aa). 2 stretches are compositionally biased toward low complexity: residues 170-211 and 219-241; these read AATS…TVVA and TAAT…SQAG.

This sequence belongs to the RodZ family.

Its subcellular location is the cell inner membrane. Functionally, cytoskeletal protein that is involved in cell-shape control through regulation of the length of the long axis. The chain is Cytoskeleton protein RodZ from Salmonella agona (strain SL483).